We begin with the raw amino-acid sequence, 336 residues long: Glyceraldehyde-3-phosphate dehydrogenase 1 (336 aa).

NAD(+)-binding positions include 12 to 13 (RI), aspartate 34, and serine 120. D-glyceraldehyde 3-phosphate contacts are provided by residues 150–152 (SCT), threonine 181, arginine 198, 211–212 (TG), and arginine 234. Cysteine 151 serves as the catalytic Nucleophile. An NAD(+)-binding site is contributed by asparagine 316.

This sequence belongs to the glyceraldehyde-3-phosphate dehydrogenase family. As to quaternary structure, homotetramer.

Its subcellular location is the cytoplasm. It catalyses the reaction D-glyceraldehyde 3-phosphate + phosphate + NAD(+) = (2R)-3-phospho-glyceroyl phosphate + NADH + H(+). The protein operates within carbohydrate degradation; glycolysis; pyruvate from D-glyceraldehyde 3-phosphate: step 1/5. Catalyzes the oxidative phosphorylation of glyceraldehyde 3-phosphate (G3P) to 1,3-bisphosphoglycerate (BPG) using the cofactor NAD. The first reaction step involves the formation of a hemiacetal intermediate between G3P and a cysteine residue, and this hemiacetal intermediate is then oxidized to a thioester, with concomitant reduction of NAD to NADH. The reduced NADH is then exchanged with the second NAD, and the thioester is attacked by a nucleophilic inorganic phosphate to produce BPG. The sequence is that of Glyceraldehyde-3-phosphate dehydrogenase 1 (gapA1) from Staphylococcus epidermidis (strain ATCC 35984 / DSM 28319 / BCRC 17069 / CCUG 31568 / BM 3577 / RP62A).